Consider the following 54-residue polypeptide: Ovomucoid (54 aa).

A Kazal-like domain is found at 4-54 (VDCSDYPKPACTLEYMPLCGSDNKTYGNKCNFCNAVVDSNGTLTLSHFGKC). 3 disulfides stabilise this stretch: Cys6–Cys36, Cys14–Cys33, and Cys22–Cys54. N-linked (GlcNAc...) asparagine glycosylation occurs at Asn43.

The protein localises to the secreted. This Dendrocygna arcuata (Wandering whistling-duck) protein is Ovomucoid.